The following is a 287-amino-acid chain: Large ribosomal subunit protein uL2 (287 aa).

The tract at residues 221–287 (RGSVMNPCDH…SKRSRGGRDS (67 aa)) is disordered. Residues 258–287 (KTRKKNKPSNKLVVRRRRRISKRSRGGRDS) are compositionally biased toward basic residues.

The protein belongs to the universal ribosomal protein uL2 family. In terms of assembly, part of the 50S ribosomal subunit. Forms a bridge to the 30S subunit in the 70S ribosome.

Functionally, one of the primary rRNA binding proteins. Required for association of the 30S and 50S subunits to form the 70S ribosome, for tRNA binding and peptide bond formation. It has been suggested to have peptidyltransferase activity; this is somewhat controversial. Makes several contacts with the 16S rRNA in the 70S ribosome. The chain is Large ribosomal subunit protein uL2 from Prochlorococcus marinus (strain MIT 9215).